The following is a 577-amino-acid chain: Proline--tRNA ligase (577 aa).

This sequence belongs to the class-II aminoacyl-tRNA synthetase family. ProS type 1 subfamily. As to quaternary structure, homodimer.

The protein localises to the cytoplasm. The catalysed reaction is tRNA(Pro) + L-proline + ATP = L-prolyl-tRNA(Pro) + AMP + diphosphate. In terms of biological role, catalyzes the attachment of proline to tRNA(Pro) in a two-step reaction: proline is first activated by ATP to form Pro-AMP and then transferred to the acceptor end of tRNA(Pro). As ProRS can inadvertently accommodate and process non-cognate amino acids such as alanine and cysteine, to avoid such errors it has two additional distinct editing activities against alanine. One activity is designated as 'pretransfer' editing and involves the tRNA(Pro)-independent hydrolysis of activated Ala-AMP. The other activity is designated 'posttransfer' editing and involves deacylation of mischarged Ala-tRNA(Pro). The misacylated Cys-tRNA(Pro) is not edited by ProRS. In Helicobacter pylori (strain ATCC 700392 / 26695) (Campylobacter pylori), this protein is Proline--tRNA ligase.